We begin with the raw amino-acid sequence, 65 residues long: Large ribosomal subunit protein bL33m (65 aa).

This sequence belongs to the bacterial ribosomal protein bL33 family. As to quaternary structure, component of the mitochondrial ribosome large subunit (39S) which comprises a 16S rRNA and about 50 distinct proteins.

It localises to the mitochondrion. The polypeptide is Large ribosomal subunit protein bL33m (mRpL33) (Anopheles gambiae (African malaria mosquito)).